A 438-amino-acid polypeptide reads, in one-letter code: Gamma-glutamyl phosphate reductase (438 aa).

It belongs to the gamma-glutamyl phosphate reductase family.

It is found in the cytoplasm. It carries out the reaction L-glutamate 5-semialdehyde + phosphate + NADP(+) = L-glutamyl 5-phosphate + NADPH + H(+). It functions in the pathway amino-acid biosynthesis; L-proline biosynthesis; L-glutamate 5-semialdehyde from L-glutamate: step 2/2. Its function is as follows. Catalyzes the NADPH-dependent reduction of L-glutamate 5-phosphate into L-glutamate 5-semialdehyde and phosphate. The product spontaneously undergoes cyclization to form 1-pyrroline-5-carboxylate. This Prochlorococcus marinus (strain MIT 9303) protein is Gamma-glutamyl phosphate reductase.